The chain runs to 469 residues: 3-isopropylmalate dehydratase large subunit (469 aa).

Residues C350, C410, and C413 each contribute to the [4Fe-4S] cluster site.

This sequence belongs to the aconitase/IPM isomerase family. LeuC type 1 subfamily. Heterodimer of LeuC and LeuD. [4Fe-4S] cluster serves as cofactor.

It carries out the reaction (2R,3S)-3-isopropylmalate = (2S)-2-isopropylmalate. The protein operates within amino-acid biosynthesis; L-leucine biosynthesis; L-leucine from 3-methyl-2-oxobutanoate: step 2/4. Its function is as follows. Catalyzes the isomerization between 2-isopropylmalate and 3-isopropylmalate, via the formation of 2-isopropylmaleate. In Mesorhizobium japonicum (strain LMG 29417 / CECT 9101 / MAFF 303099) (Mesorhizobium loti (strain MAFF 303099)), this protein is 3-isopropylmalate dehydratase large subunit.